Consider the following 690-residue polypeptide: Elongation factor G (690 aa).

A tr-type G domain is found at 8-283 (EDYRNFGIMA…AVVDYLPSPL (276 aa)). GTP is bound by residues 17 to 24 (AHIDAGKT), 81 to 85 (DTPGH), and 135 to 138 (NKMD).

The protein belongs to the TRAFAC class translation factor GTPase superfamily. Classic translation factor GTPase family. EF-G/EF-2 subfamily.

Its subcellular location is the cytoplasm. Catalyzes the GTP-dependent ribosomal translocation step during translation elongation. During this step, the ribosome changes from the pre-translocational (PRE) to the post-translocational (POST) state as the newly formed A-site-bound peptidyl-tRNA and P-site-bound deacylated tRNA move to the P and E sites, respectively. Catalyzes the coordinated movement of the two tRNA molecules, the mRNA and conformational changes in the ribosome. This Bradyrhizobium sp. (strain BTAi1 / ATCC BAA-1182) protein is Elongation factor G.